The following is a 485-amino-acid chain: Putative ATP-dependent RNA helicase ste13 (485 aa).

The tract at residues 16-38 is disordered; sequence DRESFKGQMKAQPVDMRPKTEDV. Residues 44 to 72 carry the Q motif motif; it reads TEFEDYYLKRELLMGIFEAGFERPSPIQE. The Helicase ATP-binding domain maps to 75–245; that stretch reads IPIALSGRDI…DKHLNKPYEI (171 aa). Residue 88–95 participates in ATP binding; the sequence is AKNGTGKT. The DEAD box motif lies at 193–196; sequence DEAD. Residues 255–415 form the Helicase C-terminal domain; it reads GVTQYYAFVD…PIPPSIDPSL (161 aa). The disordered stretch occupies residues 437–485; sequence LAAQQAKGQEGYHNRPNNNRGGHPRGGGNRGGYRQSNRQPRYRGQQKAD.

Belongs to the DEAD box helicase family. DDX6/DHH1 subfamily.

It is found in the cytoplasm. The protein resides in the P-body. It catalyses the reaction ATP + H2O = ADP + phosphate + H(+). Its function is as follows. ATP-dependent RNA helicase involved in mRNA turnover, and more specifically in mRNA decapping. Is involved in G1/S DNA-damage checkpoint recovery, probably through the regulation of the translational status of a subset of mRNAs. May also have a role in translation and mRNA nuclear export. This chain is Putative ATP-dependent RNA helicase ste13 (ste13), found in Schizosaccharomyces pombe (strain 972 / ATCC 24843) (Fission yeast).